The primary structure comprises 267 residues: Tryptophan synthase alpha chain (267 aa).

Active-site proton acceptor residues include glutamate 47 and aspartate 58.

The protein belongs to the TrpA family. Tetramer of two alpha and two beta chains.

It carries out the reaction (1S,2R)-1-C-(indol-3-yl)glycerol 3-phosphate + L-serine = D-glyceraldehyde 3-phosphate + L-tryptophan + H2O. It functions in the pathway amino-acid biosynthesis; L-tryptophan biosynthesis; L-tryptophan from chorismate: step 5/5. The alpha subunit is responsible for the aldol cleavage of indoleglycerol phosphate to indole and glyceraldehyde 3-phosphate. The chain is Tryptophan synthase alpha chain from Chlorobaculum tepidum (strain ATCC 49652 / DSM 12025 / NBRC 103806 / TLS) (Chlorobium tepidum).